We begin with the raw amino-acid sequence, 449 residues long: Protein translocase subunit SecD (449 aa).

6 helical membrane passes run 6–26 (GLVFLAILAAMILAFTIVLPT), 272–292 (LAVKAGLVGIILVMIFMIAFY), 294–314 (LPGLLASIALVFYGVIVLALF), 317–337 (VPVTLTLAGIGGFIVSAGMAV), 379–399 (TFIACGILFWVGGTIAAGAPV), and 401–421 (GFAVTLFLGVAVSMFTAIFVT).

Belongs to the SecD/SecF family. SecD subfamily. In terms of assembly, forms a complex with SecF. Part of the essential Sec protein translocation apparatus which comprises SecA, SecYEG and auxiliary proteins SecDF. Other proteins may also be involved.

Its subcellular location is the cell membrane. Functionally, part of the Sec protein translocase complex. Interacts with the SecYEG preprotein conducting channel. SecDF uses the proton motive force (PMF) to complete protein translocation after the ATP-dependent function of SecA. The sequence is that of Protein translocase subunit SecD from Dehalococcoides mccartyi (strain VS).